The following is a 207-amino-acid chain: Large ribosomal subunit protein uL4 (207 aa).

Residues 44–78 (QRQGTHDVKNRSEVRGGGRKPWRQKGTGRARQGSI) are disordered. Residues 47-59 (GTHDVKNRSEVRG) are compositionally biased toward basic and acidic residues. Positions 60 to 71 (GGRKPWRQKGTG) are enriched in basic residues.

Belongs to the universal ribosomal protein uL4 family. In terms of assembly, part of the 50S ribosomal subunit.

Its function is as follows. One of the primary rRNA binding proteins, this protein initially binds near the 5'-end of the 23S rRNA. It is important during the early stages of 50S assembly. It makes multiple contacts with different domains of the 23S rRNA in the assembled 50S subunit and ribosome. In terms of biological role, forms part of the polypeptide exit tunnel. This is Large ribosomal subunit protein uL4 from Brevibacillus brevis (strain 47 / JCM 6285 / NBRC 100599).